The chain runs to 352 residues: Ribosomal RNA large subunit methyltransferase M (352 aa).

S-adenosyl-L-methionine is bound by residues serine 184, 217–220, aspartate 236, aspartate 256, and aspartate 272; that span reads APGG. Catalysis depends on lysine 301, which acts as the Proton acceptor.

This sequence belongs to the class I-like SAM-binding methyltransferase superfamily. RNA methyltransferase RlmE family. RlmM subfamily. As to quaternary structure, monomer.

The protein resides in the cytoplasm. The catalysed reaction is cytidine(2498) in 23S rRNA + S-adenosyl-L-methionine = 2'-O-methylcytidine(2498) in 23S rRNA + S-adenosyl-L-homocysteine + H(+). Functionally, catalyzes the 2'-O-methylation at nucleotide C2498 in 23S rRNA. The polypeptide is Ribosomal RNA large subunit methyltransferase M (Pseudomonas aeruginosa (strain UCBPP-PA14)).